The primary structure comprises 312 residues: Acetylglutamate kinase (312 aa).

Substrate contacts are provided by residues glycine 77–glycine 78, arginine 99, and asparagine 192.

The protein belongs to the acetylglutamate kinase family. ArgB subfamily.

Its subcellular location is the cytoplasm. The enzyme catalyses N-acetyl-L-glutamate + ATP = N-acetyl-L-glutamyl 5-phosphate + ADP. Its pathway is amino-acid biosynthesis; L-arginine biosynthesis; N(2)-acetyl-L-ornithine from L-glutamate: step 2/4. Functionally, catalyzes the ATP-dependent phosphorylation of N-acetyl-L-glutamate. This is Acetylglutamate kinase from Synechococcus sp. (strain JA-2-3B'a(2-13)) (Cyanobacteria bacterium Yellowstone B-Prime).